A 129-amino-acid polypeptide reads, in one-letter code: GEL complex subunit OPTI (129 aa).

The Cytoplasmic segment spans residues 1–44; the sequence is MSGGRRKEEPPQPQLANGALKVSVWSKVLRSDAAWEDKDEFLDV. A helical transmembrane segment spans residues 45–65; sequence IYWFRQIIAVVLGVIWGVLPL. Position 66 (Arg66) is a topological domain, lumenal. The chain crosses the membrane as a helical span at residues 67-84; it reads GFLGIAGFCVINAGVLYL. Over 85–103 the chain is Cytoplasmic; sequence YFSNYLQIDEEEYGGTWEL. The helical transmembrane segment at 104 to 127 threads the bilayer; it reads TKEGFMTSFALFMVIWIIFYTAIH. Over 128–129 the chain is Lumenal; that stretch reads YD.

Belongs to the EMC6 family. As to quaternary structure, component of the GET- and EMC-like (GEL) complex, composed of RAB5IF/OPTI and TMCO1. The GEL complex is part of the multi-pass translocon (MPT) complex, composed of three subcomplexes, the GEL complex (composed of RAB5IF/OPTI and TMCO1), the BOS complex (composed of NCLN/Nicalin, NOMO1 and TMEM147) and the PAT complex (composed of WDR83OS/Asterix and CCDC47). The MPT complex associates with the SEC61 complex. Interacts with NDUFS3, NDUFA4, NDUFV1, NDUFA9 and NDUFS8 of the mitochondrial membrane respiratory chain NADH dehydrogenase (Complex I). Interacts with UQCRC2 of the ubiquinol-cytochrome c reductase complex (Complex III). Interacts with COX5A and COX7C of the cytochrome c oxidase complex (Complex IV).

Its subcellular location is the endoplasmic reticulum membrane. The protein localises to the mitochondrion inner membrane. Functionally, component of the multi-pass translocon (MPT) complex that mediates insertion of multi-pass membrane proteins into the lipid bilayer of membranes. The MPT complex takes over after the SEC61 complex: following membrane insertion of the first few transmembrane segments of proteins by the SEC61 complex, the MPT complex occludes the lateral gate of the SEC61 complex to promote insertion of subsequent transmembrane regions. Within the MPT complex, the GEL subcomplex may mediate insertion of transmembrane regions into the membrane. In addition to its role in multi-pass membrane insertion, RAB5IF/OPTI also acts as an assembly factor for mitochondrial respiratory complexes. This is GEL complex subunit OPTI (RAB5IF) from Canis lupus familiaris (Dog).